We begin with the raw amino-acid sequence, 167 residues long: 3-isopropylmalate dehydratase small subunit (167 aa).

This sequence belongs to the LeuD family. LeuD type 2 subfamily. In terms of assembly, heterodimer of LeuC and LeuD.

The catalysed reaction is (2R,3S)-3-isopropylmalate = (2S)-2-isopropylmalate. It functions in the pathway amino-acid biosynthesis; L-leucine biosynthesis; L-leucine from 3-methyl-2-oxobutanoate: step 2/4. In terms of biological role, catalyzes the isomerization between 2-isopropylmalate and 3-isopropylmalate, via the formation of 2-isopropylmaleate. The protein is 3-isopropylmalate dehydratase small subunit of Oleidesulfovibrio alaskensis (strain ATCC BAA-1058 / DSM 17464 / G20) (Desulfovibrio alaskensis).